Consider the following 137-residue polypeptide: Large ribosomal subunit protein uL16c (137 aa).

Belongs to the universal ribosomal protein uL16 family. Part of the 50S ribosomal subunit.

It is found in the plastid. The protein localises to the chloroplast. This is Large ribosomal subunit protein uL16c from Trieres chinensis (Marine centric diatom).